We begin with the raw amino-acid sequence, 301 residues long: Peroxisome assembly protein 26 (301 aa).

Residues 1–246 lie on the Cytoplasmic side of the membrane; that stretch reads MKNDSSTSAA…DAAASHLLSQ (246 aa). A helical; Signal-anchor for type II membrane protein membrane pass occupies residues 247-263; the sequence is PFKKSLLAALILCLLVL. Over 264–301 the chain is Peroxisomal; the sequence is RFDPATPSSLPFLYQLAHLFRRIQKATLSRLYPLALRD.

The protein belongs to the peroxin-26 family. As to quaternary structure, interacts directly with PEX6 via its cytoplasmic domain. Interacts indirectly with PEX1, via its interaction with PEX6.

Its subcellular location is the peroxisome membrane. Functionally, peroxisomal docking factor that anchors PEX1 and PEX6 to peroxisome membranes. It is therefore required for the formation of the PEX1-PEX6 AAA ATPase complex, a complex that mediates the extraction of the PEX5 receptor from peroxisomal membrane. This chain is Peroxisome assembly protein 26 (Pex26), found in Cricetulus griseus (Chinese hamster).